Here is a 154-residue protein sequence, read N- to C-terminus: SsrA-binding protein (154 aa).

This sequence belongs to the SmpB family.

It is found in the cytoplasm. Required for rescue of stalled ribosomes mediated by trans-translation. Binds to transfer-messenger RNA (tmRNA), required for stable association of tmRNA with ribosomes. tmRNA and SmpB together mimic tRNA shape, replacing the anticodon stem-loop with SmpB. tmRNA is encoded by the ssrA gene; the 2 termini fold to resemble tRNA(Ala) and it encodes a 'tag peptide', a short internal open reading frame. During trans-translation Ala-aminoacylated tmRNA acts like a tRNA, entering the A-site of stalled ribosomes, displacing the stalled mRNA. The ribosome then switches to translate the ORF on the tmRNA; the nascent peptide is terminated with the 'tag peptide' encoded by the tmRNA and targeted for degradation. The ribosome is freed to recommence translation, which seems to be the essential function of trans-translation. The polypeptide is SsrA-binding protein (Enterococcus hirae (strain ATCC 9790 / DSM 20160 / JCM 8729 / LMG 6399 / NBRC 3181 / NCIMB 6459 / NCDO 1258 / NCTC 12367 / WDCM 00089 / R)).